The following is a 127-amino-acid chain: Large ribosomal subunit protein eL8 (127 aa).

The protein belongs to the eukaryotic ribosomal protein eL8 family. As to quaternary structure, part of the 50S ribosomal subunit. Probably part of the RNase P complex.

It localises to the cytoplasm. Multifunctional RNA-binding protein that recognizes the K-turn motif in ribosomal RNA, the RNA component of RNase P, box H/ACA, box C/D and box C'/D' sRNAs. The sequence is that of Large ribosomal subunit protein eL8 from Aeropyrum pernix (strain ATCC 700893 / DSM 11879 / JCM 9820 / NBRC 100138 / K1).